The following is a 569-amino-acid chain: Probable protein phosphatase 2C BIPP2C1 (569 aa).

2 disordered regions span residues 120–214 (EVSP…KVTG) and 251–279 (SLDDSEASDGSTTQDFDTDVETESSGSSI). Residues 179–188 (ESERGSDADG) show a composition bias toward basic and acidic residues. A PPM-type phosphatase domain is found at 329–564 (AAMLPHPSKV…DDVTVVVSVV (236 aa)). The Mn(2+) site is built by D358, G359, D488, and D555.

It belongs to the PP2C family. The cofactor is Mg(2+). Requires Mn(2+) as cofactor.

It catalyses the reaction O-phospho-L-seryl-[protein] + H2O = L-seryl-[protein] + phosphate. The enzyme catalyses O-phospho-L-threonyl-[protein] + H2O = L-threonyl-[protein] + phosphate. In terms of biological role, may play a role in responses to biotic and abiotic stresses. This chain is Probable protein phosphatase 2C BIPP2C1 (BIPP2C1), found in Oryza sativa subsp. japonica (Rice).